The primary structure comprises 830 residues: Leucine--tRNA ligase (830 aa).

A 'HIGH' region motif is present at residues 42 to 52; sequence PYPSGNLHMGH. Positions 585-589 match the 'KMSKS' region motif; the sequence is KMSKS. Position 588 (Lys-588) interacts with ATP.

This sequence belongs to the class-I aminoacyl-tRNA synthetase family.

It is found in the cytoplasm. The catalysed reaction is tRNA(Leu) + L-leucine + ATP = L-leucyl-tRNA(Leu) + AMP + diphosphate. This is Leucine--tRNA ligase from Halothermothrix orenii (strain H 168 / OCM 544 / DSM 9562).